Reading from the N-terminus, the 489-residue chain is Rhamnulokinase (489 aa).

A13 to R17 lines the ATP pocket. An intrachain disulfide couples C68 to C222. Substrate-binding positions include G83 and H236–T238. Residue D237 is the Proton acceptor of the active site. T259 is a binding site for ATP. N296 is a binding site for substrate. Q304 contributes to the ATP binding site. The cysteines at positions 353 and 370 are disulfide-linked. G402 contacts ATP. C413 and C417 are disulfide-bonded.

This sequence belongs to the rhamnulokinase family. In terms of assembly, monomer. Mg(2+) serves as cofactor.

The enzyme catalyses L-rhamnulose + ATP = L-rhamnulose 1-phosphate + ADP + H(+). It functions in the pathway carbohydrate degradation; L-rhamnose degradation; glycerone phosphate from L-rhamnose: step 2/3. Functionally, involved in the catabolism of L-rhamnose (6-deoxy-L-mannose). Catalyzes the transfer of the gamma-phosphate group from ATP to the 1-hydroxyl group of L-rhamnulose to yield L-rhamnulose 1-phosphate. The polypeptide is Rhamnulokinase (Escherichia coli (strain SE11)).